We begin with the raw amino-acid sequence, 224 residues long: 7-cyano-7-deazaguanine synthase (224 aa).

9–19 (LSGGLDSATAL) serves as a coordination point for ATP. Residues cysteine 188, cysteine 198, cysteine 201, and cysteine 204 each contribute to the Zn(2+) site.

It belongs to the QueC family. The cofactor is Zn(2+).

It catalyses the reaction 7-carboxy-7-deazaguanine + NH4(+) + ATP = 7-cyano-7-deazaguanine + ADP + phosphate + H2O + H(+). It functions in the pathway purine metabolism; 7-cyano-7-deazaguanine biosynthesis. Its function is as follows. Catalyzes the ATP-dependent conversion of 7-carboxy-7-deazaguanine (CDG) to 7-cyano-7-deazaguanine (preQ(0)). The chain is 7-cyano-7-deazaguanine synthase from Thiobacillus denitrificans (strain ATCC 25259 / T1).